The chain runs to 309 residues: Methionyl-tRNA formyltransferase (309 aa).

A (6S)-5,6,7,8-tetrahydrofolate-binding site is contributed by 107–110; it reads SLLP.

Belongs to the Fmt family.

The catalysed reaction is L-methionyl-tRNA(fMet) + (6R)-10-formyltetrahydrofolate = N-formyl-L-methionyl-tRNA(fMet) + (6S)-5,6,7,8-tetrahydrofolate + H(+). Functionally, attaches a formyl group to the free amino group of methionyl-tRNA(fMet). The formyl group appears to play a dual role in the initiator identity of N-formylmethionyl-tRNA by promoting its recognition by IF2 and preventing the misappropriation of this tRNA by the elongation apparatus. This Borrelia turicatae (strain 91E135) protein is Methionyl-tRNA formyltransferase.